Reading from the N-terminus, the 309-residue chain is Taste receptor type 2 member 43 (309 aa).

Position 1 (Met1) is a topological domain, extracellular. A helical transmembrane segment spans residues 2–22 (ITFLPIIFSSLVVVTFVIGNF). At 23-46 (ANGFIALVNSIEWFKRQKISFADQ) the chain is on the cytoplasmic side. A helical membrane pass occupies residues 47–67 (ILTALAVSRVGLLWVLLLNWY). At 68-86 (LTVLNPAFNSVEVRTTAYN) the chain is on the extracellular side. A helical membrane pass occupies residues 87–107 (IWAVINHFSNWLATSLSIFYL). Residues 108 to 126 (LKIANFSNFIFLHLKRRVK) are Cytoplasmic-facing. Residues 127-147 (SVILVMLLGPLLFLACHLFMI) form a helical membrane-spanning segment. Residues 148-178 (NMNEIVRTKEFDGNMTWKIKLKSAMYFSNMT) are Extracellular-facing. N-linked (GlcNAc...) asparagine glycans are attached at residues Asn161 and Asn176. The chain crosses the membrane as a helical span at residues 179–199 (VTMVANLVPFTLTLLSFLLLI). Topologically, residues 200–229 (CSLCKHLKKMQLHGKGSQDPSTKVHIKALQ) are cytoplasmic. The chain crosses the membrane as a helical span at residues 230–250 (TVISFLLLCAIYFLSIMISVW). Over 251–259 (SFGSLENKP) the chain is Extracellular. Residues 260 to 280 (VFMFCKAIRFSYPSIHPFILI) traverse the membrane as a helical segment. The Cytoplasmic segment spans residues 281-309 (WGNKKLKQTFLSVFWQMRYWVKGEKTSSP).

Belongs to the G-protein coupled receptor T2R family.

It localises to the membrane. The protein localises to the cell projection. Its subcellular location is the cilium membrane. Functionally, gustducin-coupled receptor immplicated in the perception of bitter compounds in the oral cavity and the gastrointestinal tract. Signals through PLCB2 and the calcium-regulated cation channel TRPM5. Activated by the sulfonyl amide sweeteners saccharin and acesulfame K. In airway epithelial cells, binding of bitter compounds increases the intracellular calcium ion concentration and stimulates ciliary beat frequency. May act as chemosensory receptors in airway epithelial cells to detect and eliminate potential noxious agents from the airways. This Pan paniscus (Pygmy chimpanzee) protein is Taste receptor type 2 member 43 (TAS2R43).